The primary structure comprises 239 residues: Small ribosomal subunit protein uS3 (239 aa).

The region spanning 39-107 (VREFLRKKLA…ATSINIEEIR (69 aa)) is the KH type-2 domain. Residues 215 to 239 (TSNTNELSDEKRNRRKPRNANRRKE) are disordered. Positions 227 to 239 (NRRKPRNANRRKE) are enriched in basic residues.

Belongs to the universal ribosomal protein uS3 family. As to quaternary structure, part of the 30S ribosomal subunit. Forms a tight complex with proteins S10 and S14.

Its function is as follows. Binds the lower part of the 30S subunit head. Binds mRNA in the 70S ribosome, positioning it for translation. The polypeptide is Small ribosomal subunit protein uS3 (Dichelobacter nodosus (strain VCS1703A)).